The primary structure comprises 662 residues: UvrABC system protein B (662 aa).

In terms of domain architecture, Helicase ATP-binding spans 25-182; it reads KGIEKGEKFQ…KKLVEIQYER (158 aa). An ATP-binding site is contributed by 38–45; that stretch reads GVTGSGKT. The Beta-hairpin motif lies at 91-114; that stretch reads YYDYYQPEAYVAQSDTYIEKDASI. In terms of domain architecture, Helicase C-terminal spans 429–595; it reads QIDDLYTSIQ…TIIKDIREVI (167 aa). A UVR domain is found at 622 to 657; sequence DKLIEKYEEEMKEAAQNLQFEKAAHLRDVIYKLKRD.

Belongs to the UvrB family. In terms of assembly, forms a heterotetramer with UvrA during the search for lesions. Interacts with UvrC in an incision complex.

The protein localises to the cytoplasm. In terms of biological role, the UvrABC repair system catalyzes the recognition and processing of DNA lesions. A damage recognition complex composed of 2 UvrA and 2 UvrB subunits scans DNA for abnormalities. Upon binding of the UvrA(2)B(2) complex to a putative damaged site, the DNA wraps around one UvrB monomer. DNA wrap is dependent on ATP binding by UvrB and probably causes local melting of the DNA helix, facilitating insertion of UvrB beta-hairpin between the DNA strands. Then UvrB probes one DNA strand for the presence of a lesion. If a lesion is found the UvrA subunits dissociate and the UvrB-DNA preincision complex is formed. This complex is subsequently bound by UvrC and the second UvrB is released. If no lesion is found, the DNA wraps around the other UvrB subunit that will check the other stand for damage. This Clostridium botulinum (strain Loch Maree / Type A3) protein is UvrABC system protein B.